The primary structure comprises 134 residues: uncharacterized protein (134 aa).

This sequence belongs to the ycf68 family.

The protein localises to the plastid. Its subcellular location is the chloroplast. This is an uncharacterized protein from Saccharum hybrid (Sugarcane).